Consider the following 147-residue polypeptide: Heavy metal-dependent transcription regulator 1 (147 aa).

Residues 1 to 70 (MNIGQASKVV…VEQIKDLLAL (70 aa)) enclose the HTH merR-type domain. Positions 3–22 (IGQASKVVSGVSSKMIRYYE) form a DNA-binding region, H-T-H motif.

It localises to the cytoplasm. Transcriptional regulator involved in acid tolerance. Binds copper. The polypeptide is Heavy metal-dependent transcription regulator 1 (hmrR1) (Rhizobium meliloti (strain 1021) (Ensifer meliloti)).